The sequence spans 245 residues: Probable transcriptional regulatory protein pc1328 (245 aa).

Belongs to the TACO1 family.

The protein resides in the cytoplasm. This Protochlamydia amoebophila (strain UWE25) protein is Probable transcriptional regulatory protein pc1328.